A 460-amino-acid chain; its full sequence is MEISIDSLWSQVLERLQIELSRPTFETWIKTANAERLENNCLVIITPNPFARNWLQKYYITTIANVVQSILGHPVEIYITVAKGEEFEEIGGGGAWELPTTNSIYETPNQNRQPNTELNAKYVFSRFVVGANNRMAHAASLAVAESPGREFNPLFLCGGVGLGKTHLMQAIGHYRWEICPDSKIFYVSTEQFTNDLITAIRNDSMQSFREHYRAADVLLVDDIQFIEGKEYTQEEFFHTFNTLHEAGKQVVIASDRPPNQIPSLQERLCSRFSMGLIADIQAPDLETRMAILQKKSEYEKIRLPRDVIEYIATNFTSNIRELEGALTRALAYISIWGLPMTVANLAPVLVTPTEKIAATPEAILTVIADNFDISVEDLKSNSRRREISWARQIGMYLMRQHTDLSFPRIGEEFGGKDHTTVLYSCDKIAQLVESDRGLSQTLRQLSDRIKMNSRSRKPSL.

Residues 1 to 73 (MEISIDSLWS…ANVVQSILGH (73 aa)) form a domain I, interacts with DnaA modulators region. The interval 73–116 (HPVEIYITVAKGEEFEEIGGGGAWELPTTNSIYETPNQNRQPNT) is domain II. The domain III, AAA+ region stretch occupies residues 117 to 333 (ELNAKYVFSR…GALTRALAYI (217 aa)). ATP is bound by residues Gly-161, Gly-163, Lys-164, and Thr-165. Residues 334-460 (SIWGLPMTVA…MNSRSRKPSL (127 aa)) are domain IV, binds dsDNA.

It belongs to the DnaA family. In terms of assembly, oligomerizes as a right-handed, spiral filament on DNA at oriC.

The protein resides in the cytoplasm. Its function is as follows. Plays an essential role in the initiation and regulation of chromosomal replication. ATP-DnaA binds to the origin of replication (oriC) to initiate formation of the DNA replication initiation complex once per cell cycle. Binds the DnaA box (a 9 base pair repeat at the origin) and separates the double-stranded (ds)DNA. Forms a right-handed helical filament on oriC DNA; dsDNA binds to the exterior of the filament while single-stranded (ss)DNA is stabiized in the filament's interior. The ATP-DnaA-oriC complex binds and stabilizes one strand of the AT-rich DNA unwinding element (DUE), permitting loading of DNA polymerase. After initiation quickly degrades to an ADP-DnaA complex that is not apt for DNA replication. Binds acidic phospholipids. This chain is Chromosomal replication initiator protein DnaA, found in Trichormus variabilis (strain ATCC 29413 / PCC 7937) (Anabaena variabilis).